Consider the following 465-residue polypeptide: Probable zinc metalloprotease PTT_17836 (465 aa).

The N-terminal stretch at 1 to 20 (MRSASTLAVCAATLLQIACS) is a signal peptide. Residue asparagine 140 is glycosylated (N-linked (GlcNAc...) asparagine). Histidine 163, aspartate 183, and glutamate 216 together coordinate Zn(2+). A glycan (N-linked (GlcNAc...) asparagine) is linked at asparagine 231. Residue aspartate 243 participates in Zn(2+) binding. N-linked (GlcNAc...) asparagine glycans are attached at residues asparagine 272, asparagine 330, asparagine 378, asparagine 384, asparagine 421, and asparagine 426. Residues 371–464 (APTNVGVNTT…LPFPFGCARN (94 aa)) form the Fibronectin type-III domain.

It belongs to the peptidase M28 family. M28B subfamily. Zn(2+) is required as a cofactor.

The protein localises to the secreted. This Pyrenophora teres f. teres (strain 0-1) (Barley net blotch fungus) protein is Probable zinc metalloprotease PTT_17836.